The following is a 355-amino-acid chain: uncharacterized protein (355 aa).

Transmembrane regions (helical) follow at residues S275–F295, W301–V321, and I330–L350.

It to M.tuberculosis Rv0497.

The protein localises to the cell membrane. This is an uncharacterized protein from Mycobacterium leprae (strain TN).